The sequence spans 133 residues: Large ribosomal subunit protein bL17 (133 aa).

It belongs to the bacterial ribosomal protein bL17 family. Part of the 50S ribosomal subunit. Contacts protein L32.

This Thermodesulfovibrio yellowstonii (strain ATCC 51303 / DSM 11347 / YP87) protein is Large ribosomal subunit protein bL17.